We begin with the raw amino-acid sequence, 348 residues long: Phenylalanine--tRNA ligase alpha subunit (348 aa).

A Mg(2+)-binding site is contributed by E259.

Belongs to the class-II aminoacyl-tRNA synthetase family. Phe-tRNA synthetase alpha subunit type 1 subfamily. In terms of assembly, tetramer of two alpha and two beta subunits. Mg(2+) serves as cofactor.

It is found in the cytoplasm. The enzyme catalyses tRNA(Phe) + L-phenylalanine + ATP = L-phenylalanyl-tRNA(Phe) + AMP + diphosphate + H(+). The polypeptide is Phenylalanine--tRNA ligase alpha subunit (Latilactobacillus sakei subsp. sakei (strain 23K) (Lactobacillus sakei subsp. sakei)).